Here is a 266-residue protein sequence, read N- to C-terminus: N-acetyltransferase ECO1 (266 aa).

The segment at 31 to 55 (KKCTECQMSYIIDSPADCAEHKKYH) adopts a CCHH-type zinc-finger fold. The N-acetyltransferase domain occupies 108–266 (TPGKTAEVKA…SGELLIPCYI (159 aa)).

It belongs to the acetyltransferase family. ECO subfamily.

It localises to the nucleus. Its function is as follows. Probable acetyltransferase required for the establishment of sister chromatid cohesion and couple the processes of cohesion and DNA replication to ensure that only sister chromatids become paired together. In contrast to the structural cohesins, the deposition and establishment factors are required only during S phase. Acts by acetylating the cohesin complex component SMC3. This chain is N-acetyltransferase ECO1 (ECO1), found in Eremothecium gossypii (strain ATCC 10895 / CBS 109.51 / FGSC 9923 / NRRL Y-1056) (Yeast).